The chain runs to 376 residues: Chaperone protein DnaJ (376 aa).

One can recognise a J domain in the interval Asp5 to Gly70. The CR-type zinc-finger motif lies at Gly132–Ser210. Zn(2+) is bound by residues Cys145, Cys148, Cys162, Cys165, Cys184, Cys187, Cys198, and Cys201. 4 CXXCXGXG motif repeats span residues Cys145–Gly152, Cys162–Gly169, Cys184–Gly191, and Cys198–Gly205.

It belongs to the DnaJ family. In terms of assembly, homodimer. The cofactor is Zn(2+).

The protein resides in the cytoplasm. In terms of biological role, participates actively in the response to hyperosmotic and heat shock by preventing the aggregation of stress-denatured proteins and by disaggregating proteins, also in an autonomous, DnaK-independent fashion. Unfolded proteins bind initially to DnaJ; upon interaction with the DnaJ-bound protein, DnaK hydrolyzes its bound ATP, resulting in the formation of a stable complex. GrpE releases ADP from DnaK; ATP binding to DnaK triggers the release of the substrate protein, thus completing the reaction cycle. Several rounds of ATP-dependent interactions between DnaJ, DnaK and GrpE are required for fully efficient folding. Also involved, together with DnaK and GrpE, in the DNA replication of plasmids through activation of initiation proteins. This Shewanella pealeana (strain ATCC 700345 / ANG-SQ1) protein is Chaperone protein DnaJ.